We begin with the raw amino-acid sequence, 425 residues long: RNA polymerase sigma factor SigA (425 aa).

The interval 193–263 is sigma-70 factor domain-2; the sequence is MVQSNLRLVV…TRAIADQSRT (71 aa). Residues 217–220 carry the Interaction with polymerase core subunit RpoC motif; sequence DLIQ. The segment at 272–347 is sigma-70 factor domain-3; it reads ETISRIKKTT…EADGETPEDE (76 aa). The sigma-70 factor domain-4 stretch occupies residues 360 to 413; that stretch reads VLDTLSPRERDVLRLRYGLDDGRMKTLEEIGQIFNVTRERIRQIEAKALRKLRH. A DNA-binding region (H-T-H motif) is located at residues 386–405; it reads LEEIGQIFNVTRERIRQIEA.

Belongs to the sigma-70 factor family. RpoD/SigA subfamily. Interacts transiently with the RNA polymerase catalytic core.

The protein localises to the cytoplasm. Sigma factors are initiation factors that promote the attachment of RNA polymerase to specific initiation sites and are then released. This sigma factor is the primary sigma factor during exponential growth. This Synechocystis sp. (strain ATCC 27184 / PCC 6803 / Kazusa) protein is RNA polymerase sigma factor SigA.